A 554-amino-acid polypeptide reads, in one-letter code: Carboxypeptidase Y homolog A (554 aa).

An N-terminal signal peptide occupies residues M1 to S17. Positions F18–K137 are excised as a propeptide. Intrachain disulfides connect C191–C431, C325–C339, C349–C372, C356–C365, and C394–C401. N-linked (GlcNAc...) asparagine glycosylation is present at N222. Residue S278 is part of the active site. D470 is a catalytic residue. A glycan (N-linked (GlcNAc...) asparagine) is linked at N518. The active site involves H529.

Belongs to the peptidase S10 family.

Its subcellular location is the vacuole. The catalysed reaction is Release of a C-terminal amino acid with broad specificity.. In terms of biological role, vacuolar carboxypeptidase involved in degradation of small peptides. Digests preferentially peptides containing an aliphatic or hydrophobic residue in P1' position, as well as methionine, leucine or phenylalanine in P1 position of ester substrate. This chain is Carboxypeptidase Y homolog A (CPYA), found in Chaetomium globosum (strain ATCC 6205 / CBS 148.51 / DSM 1962 / NBRC 6347 / NRRL 1970) (Soil fungus).